Consider the following 274-residue polypeptide: Dermonecrotic toxin SdSicTox-betaIIB2ii (274 aa).

The active site involves His-5. Positions 25 and 27 each coordinate Mg(2+). Catalysis depends on His-41, which acts as the Nucleophile. Intrachain disulfides connect Cys-45-Cys-51 and Cys-47-Cys-190. A Mg(2+)-binding site is contributed by Asp-85.

Belongs to the arthropod phospholipase D family. Class II subfamily. Mg(2+) serves as cofactor. Expressed by the venom gland.

It localises to the secreted. It catalyses the reaction an N-(acyl)-sphingosylphosphocholine = an N-(acyl)-sphingosyl-1,3-cyclic phosphate + choline. It carries out the reaction an N-(acyl)-sphingosylphosphoethanolamine = an N-(acyl)-sphingosyl-1,3-cyclic phosphate + ethanolamine. The enzyme catalyses a 1-acyl-sn-glycero-3-phosphocholine = a 1-acyl-sn-glycero-2,3-cyclic phosphate + choline. The catalysed reaction is a 1-acyl-sn-glycero-3-phosphoethanolamine = a 1-acyl-sn-glycero-2,3-cyclic phosphate + ethanolamine. In terms of biological role, dermonecrotic toxins cleave the phosphodiester linkage between the phosphate and headgroup of certain phospholipids (sphingolipid and lysolipid substrates), forming an alcohol (often choline) and a cyclic phosphate. This toxin acts on sphingomyelin (SM). It may also act on ceramide phosphoethanolamine (CPE), lysophosphatidylcholine (LPC) and lysophosphatidylethanolamine (LPE), but not on lysophosphatidylserine (LPS), and lysophosphatidylglycerol (LPG). It acts by transphosphatidylation, releasing exclusively cyclic phosphate products as second products. Induces dermonecrosis, hemolysis, increased vascular permeability, edema, inflammatory response, and platelet aggregation. The chain is Dermonecrotic toxin SdSicTox-betaIIB2ii from Sicarius cf. damarensis (strain GJB-2008) (Six-eyed sand spider).